Reading from the N-terminus, the 590-residue chain is MYYTSGNYEAFATPRKPEGVDQKSAYIVGTGLAGLAAAVFLIRDGHMAGERIHLFEELPLAGGSLDGIEKPHLGFVTRGGREMENHFECMWDMYRSIPSLEIPGASYLDEFYWLDKDDPNSSNCRLIHKRGNRVDDDGQYTLGKQSKELIHLIMKTEESLGDQTIEEFFSEDFFKSNFWVYWATMFAFEKWHSAVEMRRYAMRFIHHIDGLPDFTSLKFNKYNQYDSMVKPIIAYLESHDVDIQFDTKVTDIQVEQTAGKKVAKTIHMTVSGEAKAIELTPDDLVFVTNGSITESSTYGSHHEVAKPTKALGGSWNLWENLAAQSDDFGHPKVFYQDLPAESWFVSATATIKHPAIEPYIERLTHRDLHDGKVNTGGIITITDSNWMMSFAIHRQPHFKEQKENETTVWIYGLYSNSEGNYVHKKIEECTGQEITEEWLYHLGVPVDKIKDLASQEYINTVPVYMPYITSYFMPRVKGDRPKVIPDGSVNLAFIGNFAESPSRDTVFTTEYSIRTAMEAVYSFLNGERGIPQGFNSAYDIRELLKAFYYLNDKKAIKDMDLPIPALIEKIGHKKIKDTFIEELLKDANLM.

Residues alanine 33, glutamate 56, serine 64, and glutamate 82 each coordinate FAD. The active-site Proton acceptor is glutamate 82. Tyrosine 200 functions as the Proton donor in the catalytic mechanism. Residues valine 249, serine 291, threonine 508, and serine 512 each coordinate FAD.

The protein belongs to the oleate hydratase family. Monomer and homodimer. Both forms seem to be active. FAD serves as cofactor.

It carries out the reaction (R)-10-hydroxyoctadecanoate = (9Z)-octadecenoate + H2O. The catalysed reaction is (9Z)-octadecenoate + H2O = 10-hydroxyoctadecanoate. It catalyses the reaction (9Z)-hexadecenoate + H2O = 10-hydroxyhexadecanoate. The enzyme catalyses (9Z,12Z)-octadecadienoate + H2O = (12Z)-10-hydroxyoctadecenoate. It carries out the reaction (12Z)-10-hydroxyoctadecenoate + H2O = 10,13-dihydroxyoctadecanoate. The catalysed reaction is (9Z,12Z,15Z)-octadecatrienoate + H2O = (12Z,15Z)-10-hydroxyoctadecadienoate. Its pathway is lipid metabolism; fatty acid metabolism. Catalyzes the hydration of oleate at its cis-9-double bond to yield 10-hydroxyoctadecanoate, probably in the (R) configuration, and of linoleate at its cis-9- and cis-12-double bond to yield 10-hydroxy-12-octadecenoate and 10,13-dihydroxyoctadecanoate. Is not active on trans-double bonds and esterified fatty acids as substrate; is only active on cis-9- and/or cis-12-double bond of C16 and C18 fatty acids without any trans-configurations, producing 10-hydroxy and 10,13-dihydroxy derivatives. Appears to play a role in oleic acid detoxification and bacterial virulence. The sequence is that of Oleate hydratase (sph) from Streptococcus pyogenes serotype M49 (strain NZ131).